Reading from the N-terminus, the 1799-residue chain is Bromodomain and WD repeat-containing protein 3 (1799 aa).

WD repeat units follow at residues 170 to 209 (IKMH…IWAT), 213 to 251 (RLLA…VWCL), 255 to 297 (APVA…FWQW), 307 to 347 (RPVK…IYYL), 353 to 393 (EKIA…IWQY), 400 to 452 (SIVL…VWNS), 456 to 495 (QLLH…IWDL), and 502 to 542 (RNYF…LFGF). Ser693 carries the post-translational modification Phosphoserine. The interval 766-912 (KKPSYPIQRN…KKKKGGLVSM (147 aa)) is disordered. Residues 784–794 (SLRRTQRKRQH) show a composition bias toward basic residues. A compositionally biased stretch (polar residues) spans 795-816 (TYLTRSNIEHNSQASSQTSGVQ). The segment covering 817-828 (EDSDSSSEEDET) has biased composition (acidic residues). The segment covering 845–858 (SESSSSDSSSEYSD) has biased composition (low complexity). Over residues 875-884 (RQATQKIYSS) the composition is skewed to polar residues. 2 positions are modified to phosphoserine: Ser884 and Ser885. The segment covering 897–907 (KKPKQTKKKKG) has biased composition (basic residues). Positions 1136-1243 (WGAHSRDEEC…DVLLRFIGDQ (108 aa)) constitute a Bromo 1 domain. Disordered regions lie at residues 1258-1291 (EDPD…KCRG), 1321-1366 (EPFR…IDTP), 1435-1482 (IQSQ…QNTS), and 1517-1723 (SPSS…AKRA). A compositionally biased stretch (acidic residues) spans 1260-1276 (PDSSDLEEDSEMVDLDS). In terms of domain architecture, Bromo 2 spans 1298-1427 (CNPDAWKKQC…ALFENHIKNI (130 aa)). A compositionally biased stretch (low complexity) spans 1333–1348 (PVQQQQEGESSQSVPP). The segment covering 1438–1450 (QKRRRPRYRKRLR) has biased composition (basic residues). Composition is skewed to low complexity over residues 1451-1463 (SSSS…RAPS) and 1517-1530 (SPSS…SGNS). 2 positions are modified to phosphoserine: Ser1574 and Ser1576. The span at 1584-1596 (GEEKEMKETKEQV) shows a compositional bias: basic and acidic residues. Low complexity predominate over residues 1598–1623 (LSSSESGELGSSLSSESTSGSDSDSE). The span at 1624-1640 (STSRTDQDYVDGDHDYS) shows a compositional bias: basic and acidic residues. Basic residues-rich tracts occupy residues 1646 to 1663 (RPKR…RNWK) and 1681 to 1694 (RGGR…RGGR). At Ser1760 the chain carries Phosphoserine.

Its function is as follows. Plays a role in the regulation of cell morphology and cytoskeletal organization. Required in the control of cell shape. The protein is Bromodomain and WD repeat-containing protein 3 (Brwd3) of Mus musculus (Mouse).